A 219-amino-acid chain; its full sequence is Transmembrane protein 247 (219 aa).

Basic and acidic residues-rich tracts occupy residues 1-10 (MAAEDREMME) and 29-45 (SKSE…ESQK). The tract at residues 1 to 101 (MAAEDREMME…LPPTPGTERN (101 aa)) is disordered. A coiled-coil region spans residues 121–156 (LHEKNQRQRQHEVVMEQLQRERQHEVVMEQLQQEAA). Transmembrane regions (helical) follow at residues 167–187 (FLLP…IHII) and 194–214 (VFFL…LCLI).

It is found in the membrane. The sequence is that of Transmembrane protein 247 (TMEM247) from Homo sapiens (Human).